Reading from the N-terminus, the 49-residue chain is DNA-directed RNA polymerase subunit Rpo12 (49 aa).

Residues Cys11, Cys27, and Cys30 each contribute to the Zn(2+) site.

This sequence belongs to the archaeal Rpo12/eukaryotic RPC10 RNA polymerase subunit family. In terms of assembly, part of the RNA polymerase complex. It depends on Zn(2+) as a cofactor.

The protein localises to the cytoplasm. It localises to the chromosome. It catalyses the reaction RNA(n) + a ribonucleoside 5'-triphosphate = RNA(n+1) + diphosphate. Its function is as follows. DNA-dependent RNA polymerase (RNAP) catalyzes the transcription of DNA into RNA using the four ribonucleoside triphosphates as substrates. This is DNA-directed RNA polymerase subunit Rpo12 from Thermococcus kodakarensis (strain ATCC BAA-918 / JCM 12380 / KOD1) (Pyrococcus kodakaraensis (strain KOD1)).